The primary structure comprises 155 residues: HTH-type transcriptional repressor MdtR (155 aa).

The HTH marR-type domain occupies 4–140 (ADQLMSDIQL…AAHITAKLAQ (137 aa)). Positions 54–77 (VSEIAERMEVKPSAVTLMADRLEQ) form a DNA-binding region, H-T-H motif.

As to quaternary structure, homodimer.

Its subcellular location is the cytoplasm. The binding of MdtR to the mdtRP promoter region is severely inhibited by adding excess concentrations of fusidic acid or novobiocin but not by actinomycin or streptomycin. Its function is as follows. Repressor of the multidrug resistance operon mdtRP. Acts by binding directly to the mdtRP promoter region, leading to the repression of its expression. This chain is HTH-type transcriptional repressor MdtR, found in Bacillus subtilis (strain 168).